We begin with the raw amino-acid sequence, 132 residues long: Small ribosomal subunit protein uS8 (132 aa).

It belongs to the universal ribosomal protein uS8 family. Part of the 30S ribosomal subunit. Contacts proteins S5 and S12.

In terms of biological role, one of the primary rRNA binding proteins, it binds directly to 16S rRNA central domain where it helps coordinate assembly of the platform of the 30S subunit. This chain is Small ribosomal subunit protein uS8, found in Streptococcus thermophilus (strain CNRZ 1066).